Here is a 505-residue protein sequence, read N- to C-terminus: Deoxyguanosinetriphosphate triphosphohydrolase (505 aa).

The 208-residue stretch at 66–273 (RLTHSMEVQQ…MEAADDISYC (208 aa)) folds into the HD domain.

It belongs to the dGTPase family. Type 1 subfamily. As to quaternary structure, homotetramer. Mg(2+) is required as a cofactor.

It carries out the reaction dGTP + H2O = 2'-deoxyguanosine + triphosphate + H(+). DGTPase preferentially hydrolyzes dGTP over the other canonical NTPs. The protein is Deoxyguanosinetriphosphate triphosphohydrolase of Escherichia coli O17:K52:H18 (strain UMN026 / ExPEC).